Here is a 494-residue protein sequence, read N- to C-terminus: MTNATDIGANDVEMEVDPTAETLADEKKNQDVAAVQEIREQIRQIEKGVASKESRFILRVLRNLPNTRRKLNGVVFRNLAQSIYPAGADREAAVALMPAVEKDATELPDVPKKQVATKAPIAEVDAYFYLLLLVKLIDASDLKRAGISADALMAKISIQNRRTLDLIGAKSYFYFSRVAELKNSLEGIRSFLHARLRTATLRNDFEGQAVLINCLLRNYLHYALYDQADKLVKKSVYPESASNNEWARFLYYLGRIKAAKLEYSDAHKHLVQALRKSPQHAAIGFRQTVQKLIIVVELLLGNIPERVVFRQAGLRQSLGAYFQLTQAVRLGNLKRFGDVVSQYGPKFQLDHTFTLIIRLRHNVIKTAIRSIGLSYSRISPQDIAKRLMLDSAEDAEFIVSKAIRDGVIEATLDPAQNFMRSKESTDIYSTREPQLAFHERISFCLNLHNQSVKAMRYPPKSYGKDLESAEERREREQQDLELAKEMAEDDEDGF.

The region spanning 247–426 is the PCI domain; sequence ARFLYYLGRI…NFMRSKESTD (180 aa). A disordered region spans residues 458 to 494; the sequence is PPKSYGKDLESAEERREREQQDLELAKEMAEDDEDGF. Residues 462–486 show a composition bias toward basic and acidic residues; it reads YGKDLESAEERREREQQDLELAKEM.

It belongs to the proteasome subunit S3 family. The 26S proteasome is composed of a core protease, known as the 20S proteasome, capped at one or both ends by the 19S regulatory complex (RC). The RC is composed of at least 18 different subunits in two subcomplexes, the base and the lid, which form the portions proximal and distal to the 20S proteolytic core, respectively. Blood (crystal) cells and cuticle.

Acts as a regulatory subunit of the 26 proteasome which is involved in the ATP-dependent degradation of ubiquitinated proteins. The chain is Probable 26S proteasome non-ATPase regulatory subunit 3 (Rpn3) from Drosophila melanogaster (Fruit fly).